We begin with the raw amino-acid sequence, 546 residues long: T-complex protein 1 subunit epsilon (546 aa).

The protein belongs to the TCP-1 chaperonin family. In terms of assembly, heterooligomeric complex of about 850 to 900 kDa that forms two stacked rings, 12 to 16 nm in diameter.

It is found in the cytoplasm. Functionally, molecular chaperone; assists the folding of proteins upon ATP hydrolysis. Known to play a role, in vitro, in the folding of actin and tubulin. This is T-complex protein 1 subunit epsilon (cct5) from Schizosaccharomyces pombe (strain 972 / ATCC 24843) (Fission yeast).